Here is a 325-residue protein sequence, read N- to C-terminus: 4-hydroxy-3-methylbut-2-enyl diphosphate reductase (325 aa).

Residue Cys13 participates in [4Fe-4S] cluster binding. Positions 42 and 76 each coordinate (2E)-4-hydroxy-3-methylbut-2-enyl diphosphate. Residues His42 and His76 each contribute to the dimethylallyl diphosphate site. Positions 42 and 76 each coordinate isopentenyl diphosphate. Position 98 (Cys98) interacts with [4Fe-4S] cluster. Residue His126 coordinates (2E)-4-hydroxy-3-methylbut-2-enyl diphosphate. Dimethylallyl diphosphate is bound at residue His126. His126 is an isopentenyl diphosphate binding site. Glu128 (proton donor) is an active-site residue. Residue Thr169 coordinates (2E)-4-hydroxy-3-methylbut-2-enyl diphosphate. Cys230 lines the [4Fe-4S] cluster pocket. The (2E)-4-hydroxy-3-methylbut-2-enyl diphosphate site is built by Ser258, Ser259, Asn260, and Ser306. Dimethylallyl diphosphate is bound by residues Ser258, Ser259, Asn260, and Ser306. Residues Ser258, Ser259, Asn260, and Ser306 each coordinate isopentenyl diphosphate.

This sequence belongs to the IspH family. [4Fe-4S] cluster is required as a cofactor.

The enzyme catalyses isopentenyl diphosphate + 2 oxidized [2Fe-2S]-[ferredoxin] + H2O = (2E)-4-hydroxy-3-methylbut-2-enyl diphosphate + 2 reduced [2Fe-2S]-[ferredoxin] + 2 H(+). It carries out the reaction dimethylallyl diphosphate + 2 oxidized [2Fe-2S]-[ferredoxin] + H2O = (2E)-4-hydroxy-3-methylbut-2-enyl diphosphate + 2 reduced [2Fe-2S]-[ferredoxin] + 2 H(+). It functions in the pathway isoprenoid biosynthesis; dimethylallyl diphosphate biosynthesis; dimethylallyl diphosphate from (2E)-4-hydroxy-3-methylbutenyl diphosphate: step 1/1. Its pathway is isoprenoid biosynthesis; isopentenyl diphosphate biosynthesis via DXP pathway; isopentenyl diphosphate from 1-deoxy-D-xylulose 5-phosphate: step 6/6. In terms of biological role, catalyzes the conversion of 1-hydroxy-2-methyl-2-(E)-butenyl 4-diphosphate (HMBPP) into a mixture of isopentenyl diphosphate (IPP) and dimethylallyl diphosphate (DMAPP). Acts in the terminal step of the DOXP/MEP pathway for isoprenoid precursor biosynthesis. The protein is 4-hydroxy-3-methylbut-2-enyl diphosphate reductase of Prosthecochloris aestuarii (strain DSM 271 / SK 413).